The sequence spans 522 residues: Amine oxidase [flavin-containing] (522 aa).

Topologically, residues methionine 1–glycine 492 are cytoplasmic. Residue cysteine 398 is modified to S-8alpha-FAD cysteine. Residues phenylalanine 493 to alanine 513 traverse the membrane as a helical; Anchor for type IV membrane protein segment. Residues cysteine 514 to cysteine 522 are Mitochondrial intermembrane-facing.

Belongs to the flavin monoamine oxidase family. As to quaternary structure, monomer, homo- or heterodimer (containing two subunits of similar size). Each subunit contains a covalently bound flavin. Enzymatically active as monomer. It depends on FAD as a cofactor. In terms of tissue distribution, strongest expression in brain and intestine, followed by liver, heart and gill. Little expression in spleen, eye or muscle. In brain, highest activity in noradrenergic and serotonergic cell groups and those of the habenulointerpeduncular pathway; moderate levels in dopaminergic cell clusters.

It localises to the mitochondrion outer membrane. The catalysed reaction is a secondary aliphatic amine + O2 + H2O = a primary amine + an aldehyde + H2O2. It carries out the reaction a primary methyl amine + O2 + H2O = an aldehyde + H2O2 + NH4(+). It catalyses the reaction serotonin + O2 + H2O = (5-hydroxyindol-3-yl)acetaldehyde + H2O2 + NH4(+). The enzyme catalyses 2-phenylethylamine + O2 + H2O = 2-phenylacetaldehyde + H2O2 + NH4(+). The catalysed reaction is tyramine + O2 + H2O = (4-hydroxyphenyl)acetaldehyde + H2O2 + NH4(+). It carries out the reaction dopamine + O2 + H2O = 3,4-dihydroxyphenylacetaldehyde + H2O2 + NH4(+). It catalyses the reaction (R)-adrenaline + O2 + H2O = (R)-3,4-dihydroxymandelaldehyde + methylamine + H2O2. The enzyme catalyses (R)-noradrenaline + O2 + H2O = (R)-3,4-dihydroxymandelaldehyde + H2O2 + NH4(+). The catalysed reaction is kynuramine + O2 + H2O = 3-(2-aminophenyl)-3-oxopropanal + H2O2 + NH4(+). It carries out the reaction tryptamine + O2 + H2O = indole-3-acetaldehyde + H2O2 + NH4(+). With respect to regulation, inhibited by both clorgyline (selective MAOA inhibitor) and deprenyl (selective MAOB inhibitor). Its function is as follows. Catalyzes the oxidative deamination of biogenic and xenobiotic amines and has important functions in the metabolism of neuroactive and vasoactive amines in the central nervous system and peripheral tissues. Preferentially oxidizes serotonin and tyramine. Also catalyzes the oxidative deamination of kynuramine to 3-(2-aminophenyl)-3-oxopropanal that can spontaneously condense to 4-hydroxyquinoline. The chain is Amine oxidase [flavin-containing] from Danio rerio (Zebrafish).